Here is a 290-residue protein sequence, read N- to C-terminus: 4-hydroxy-tetrahydrodipicolinate synthase (290 aa).

Position 44 (threonine 44) interacts with pyruvate. Tyrosine 132 serves as the catalytic Proton donor/acceptor. The Schiff-base intermediate with substrate role is filled by lysine 160. Residue isoleucine 202 coordinates pyruvate.

Belongs to the DapA family. Homotetramer; dimer of dimers.

The protein resides in the cytoplasm. The enzyme catalyses L-aspartate 4-semialdehyde + pyruvate = (2S,4S)-4-hydroxy-2,3,4,5-tetrahydrodipicolinate + H2O + H(+). It functions in the pathway amino-acid biosynthesis; L-lysine biosynthesis via DAP pathway; (S)-tetrahydrodipicolinate from L-aspartate: step 3/4. Catalyzes the condensation of (S)-aspartate-beta-semialdehyde [(S)-ASA] and pyruvate to 4-hydroxy-tetrahydrodipicolinate (HTPA). This chain is 4-hydroxy-tetrahydrodipicolinate synthase, found in Legionella pneumophila (strain Corby).